Here is a 256-residue protein sequence, read N- to C-terminus: Pimeloyl-[acyl-carrier protein] methyl ester esterase (256 aa).

Residues 15 to 242 (HLVLLHGWGL…AAHAPFISHP (228 aa)) enclose the AB hydrolase-1 domain. Substrate-binding positions include Trp-22, 82–83 (SL), and 143–147 (FLALQ). The active-site Nucleophile is the Ser-82. Active-site residues include Asp-207 and His-235. Residue His-235 participates in substrate binding.

The protein belongs to the AB hydrolase superfamily. Carboxylesterase BioH family. In terms of assembly, monomer.

The protein localises to the cytoplasm. It carries out the reaction 6-carboxyhexanoyl-[ACP] methyl ester + H2O = 6-carboxyhexanoyl-[ACP] + methanol + H(+). It functions in the pathway cofactor biosynthesis; biotin biosynthesis. In terms of biological role, the physiological role of BioH is to remove the methyl group introduced by BioC when the pimeloyl moiety is complete. It allows to synthesize pimeloyl-ACP via the fatty acid synthetic pathway through the hydrolysis of the ester bonds of pimeloyl-ACP esters. The polypeptide is Pimeloyl-[acyl-carrier protein] methyl ester esterase (Escherichia coli O139:H28 (strain E24377A / ETEC)).